The primary structure comprises 119 residues: Flagellar transcriptional regulator FlhD (119 aa).

The protein belongs to the FlhD family. In terms of assembly, homodimer; disulfide-linked. Forms a heterohexamer composed of two FlhC and four FlhD subunits. Each FlhC binds a FlhD dimer, forming a heterotrimer, and a hexamer assembles by dimerization of two heterotrimers.

It localises to the cytoplasm. Its function is as follows. Functions in complex with FlhC as a master transcriptional regulator that regulates transcription of several flagellar and non-flagellar operons by binding to their promoter region. Activates expression of class 2 flagellar genes, including fliA, which is a flagellum-specific sigma factor that turns on the class 3 genes. Also regulates genes whose products function in a variety of physiological pathways. This Shigella dysenteriae serotype 1 (strain Sd197) protein is Flagellar transcriptional regulator FlhD.